The primary structure comprises 626 residues: Chaperone protein HtpG (626 aa).

The tract at residues 1 to 339 (MSQNQETRGF…SNDLPLNVSR (339 aa)) is a; substrate-binding. Residues 340-555 (EILQDNKITA…NDQMTTQMAK (216 aa)) are b. A c region spans residues 556 to 626 (LFAAAGQPVP…FIKRINKLLG (71 aa)).

This sequence belongs to the heat shock protein 90 family. In terms of assembly, homodimer.

It localises to the cytoplasm. Molecular chaperone. Has ATPase activity. This chain is Chaperone protein HtpG, found in Haemophilus influenzae (strain PittGG).